The sequence spans 439 residues: Histidinol dehydrogenase (439 aa).

NAD(+) is bound by residues Tyr-127, Gln-185, and Asn-208. Ser-234, Gln-256, and His-259 together coordinate substrate. Positions 256 and 259 each coordinate Zn(2+). Residues Glu-323 and His-324 each act as proton acceptor in the active site. His-324, Asp-357, Glu-411, and His-416 together coordinate substrate. Asp-357 contributes to the Zn(2+) binding site. His-416 provides a ligand contact to Zn(2+).

This sequence belongs to the histidinol dehydrogenase family. Requires Zn(2+) as cofactor.

The enzyme catalyses L-histidinol + 2 NAD(+) + H2O = L-histidine + 2 NADH + 3 H(+). It participates in amino-acid biosynthesis; L-histidine biosynthesis; L-histidine from 5-phospho-alpha-D-ribose 1-diphosphate: step 9/9. Catalyzes the sequential NAD-dependent oxidations of L-histidinol to L-histidinaldehyde and then to L-histidine. In Aliivibrio fischeri (strain ATCC 700601 / ES114) (Vibrio fischeri), this protein is Histidinol dehydrogenase.